Consider the following 249-residue polypeptide: Ubiquinone/menaquinone biosynthesis C-methyltransferase UbiE (249 aa).

Residues threonine 72, aspartate 93, and 121–122 each bind S-adenosyl-L-methionine; that span reads DA.

Belongs to the class I-like SAM-binding methyltransferase superfamily. MenG/UbiE family.

It catalyses the reaction a 2-demethylmenaquinol + S-adenosyl-L-methionine = a menaquinol + S-adenosyl-L-homocysteine + H(+). The enzyme catalyses a 2-methoxy-6-(all-trans-polyprenyl)benzene-1,4-diol + S-adenosyl-L-methionine = a 5-methoxy-2-methyl-3-(all-trans-polyprenyl)benzene-1,4-diol + S-adenosyl-L-homocysteine + H(+). Its pathway is quinol/quinone metabolism; menaquinone biosynthesis; menaquinol from 1,4-dihydroxy-2-naphthoate: step 2/2. It participates in cofactor biosynthesis; ubiquinone biosynthesis. In terms of biological role, methyltransferase required for the conversion of demethylmenaquinol (DMKH2) to menaquinol (MKH2) and the conversion of 2-polyprenyl-6-methoxy-1,4-benzoquinol (DDMQH2) to 2-polyprenyl-3-methyl-6-methoxy-1,4-benzoquinol (DMQH2). In Cellvibrio japonicus (strain Ueda107) (Pseudomonas fluorescens subsp. cellulosa), this protein is Ubiquinone/menaquinone biosynthesis C-methyltransferase UbiE.